A 448-amino-acid chain; its full sequence is Mitochondrial distribution and morphology protein 10 (448 aa).

2 disordered regions span residues glutamine 101–alanine 126 and proline 366–glutamate 386. A compositionally biased stretch (basic and acidic residues) spans asparagine 112–alanine 126.

Belongs to the MDM10 family. As to quaternary structure, component of the ER-mitochondria encounter structure (ERMES) or MDM complex, composed of MMM1, MDM10, MDM12 and MDM34. Associates with the mitochondrial outer membrane sorting assembly machinery SAM(core) complex.

It is found in the mitochondrion outer membrane. Its function is as follows. Component of the ERMES/MDM complex, which serves as a molecular tether to connect the endoplasmic reticulum and mitochondria. Components of this complex are involved in the control of mitochondrial shape and protein biogenesis and may function in phospholipid exchange. MDM10 is involved in the late assembly steps of the general translocase of the mitochondrial outer membrane (TOM complex). Functions in the TOM40-specific route of the assembly of outer membrane beta-barrel proteins, including the association of TOM40 with the receptor TOM22 and small TOM proteins. Can associate with the SAM(core) complex as well as the MDM12-MMM1 complex, both involved in late steps of the major beta-barrel assembly pathway, that is responsible for biogenesis of all outer membrane beta-barrel proteins. May act as a switch that shuttles between both complexes and channels precursor proteins into the TOM40-specific pathway. Plays a role in mitochondrial morphology and in the inheritance of mitochondria. This chain is Mitochondrial distribution and morphology protein 10, found in Coccidioides immitis (strain RS) (Valley fever fungus).